Here is a 1473-residue protein sequence, read N- to C-terminus: DNA topoisomerase 2 (1473 aa).

A disordered region spans residues 1–20; it reads MATKLPLQNSNAANVAKAPA. Residues 9-20 show a composition bias toward low complexity; sequence NSNAANVAKAPA. ATP contacts are provided by residues Asn91, Asn120, 148–150, and 161–168; these read SSN and GRNGYGAK. Residues 345–347 form an interaction with DNA region; sequence NKK. 378–380 is a binding site for ATP; sequence QTK. The 115-residue stretch at 455–569 folds into the Toprim domain; that stretch reads CTLILTEGDS…SLLQVPSFLV (115 aa). Residues Glu461, Asp538, and Asp540 each coordinate Mg(2+). The region spanning 704 to 1163 is the Topo IIA-type catalytic domain; it reads IPSMVDGLKP…TPKSLWLSDL (460 aa). Catalysis depends on Tyr794, which acts as the O-(5'-phospho-DNA)-tyrosine intermediate. An interaction with DNA region spans residues 980-989; the sequence is KLTTTIATSN. 3 disordered regions span residues 1195 to 1230, 1242 to 1297, and 1313 to 1473; these read SGAA…SYSA, KPKA…EVEE, and GSAP…EDDE. 2 stretches are compositionally biased toward basic residues: residues 1200-1216 and 1278-1288; these read KVKR…KTTK and PKGRQGAKKKA. Residues 1351 to 1360 show a composition bias toward low complexity; the sequence is KPAATKAAKP. Composition is skewed to polar residues over residues 1394 to 1404 and 1417 to 1427; these read SPFNKKSSSVM and ENVAGNSSSEK. Residues 1453–1473 show a composition bias toward acidic residues; sequence SESESANDSEFDDIEDDEDDE.

Belongs to the type II topoisomerase family. As to quaternary structure, homodimer. The cofactor is Mg(2+). It depends on Mn(2+) as a cofactor. Requires Ca(2+) as cofactor.

The catalysed reaction is ATP-dependent breakage, passage and rejoining of double-stranded DNA.. Its function is as follows. Control of topological states of DNA by transient breakage and subsequent rejoining of DNA strands. Topoisomerase II makes double-strand breaks. This is DNA topoisomerase 2 (TOP2) from Arabidopsis thaliana (Mouse-ear cress).